The following is a 520-amino-acid chain: Dual specificity tyrosine-phosphorylation-regulated kinase 4 (520 aa).

Residues 1–32 (MPASELKASEIPFHPSIKTQDPKAEEKSPKKQ) form a disordered region. The Bipartite nuclear localization signal signature appears at 19-37 (TQDPKAEEKSPKKQKVTLT). Basic and acidic residues predominate over residues 20 to 29 (QDPKAEEKSP). The Protein kinase domain occupies 104–400 (YEVLETIGKG…PDQALKHAWI (297 aa)). Residues 110–118 (IGKGSFGQV), Lys133, and 183–186 (FELL) contribute to the ATP site. Asp230 acts as the Proton acceptor in catalysis. Tyr264 carries the phosphotyrosine; by autocatalysis modification. The segment at 404 to 467 (RNLKPQPRPQ…KHVQHSGDQQ (64 aa)) is disordered. The span at 439–457 (RKADEITKETTEKTKDSPT) shows a compositional bias: basic and acidic residues.

The protein belongs to the protein kinase superfamily. CMGC Ser/Thr protein kinase family. MNB/DYRK subfamily. Mg(2+) is required as a cofactor. Autophosphorylation on Tyr-264 in the activation loop is required for kinase activity.

It localises to the cytoplasm. Its subcellular location is the nucleus. The enzyme catalyses L-seryl-[protein] + ATP = O-phospho-L-seryl-[protein] + ADP + H(+). It catalyses the reaction L-threonyl-[protein] + ATP = O-phospho-L-threonyl-[protein] + ADP + H(+). It carries out the reaction L-tyrosyl-[protein] + ATP = O-phospho-L-tyrosyl-[protein] + ADP + H(+). Possible non-essential role in spermiogenesis. This is Dual specificity tyrosine-phosphorylation-regulated kinase 4 (DYRK4) from Homo sapiens (Human).